Reading from the N-terminus, the 925-residue chain is Ubp5-interacting protein ftp105 (925 aa).

Low complexity predominate over residues glutamate 650 to serine 664. Residues glutamate 650–glutamine 671 form a disordered region.

This sequence belongs to the hid-1 family. Interacts with ubp5.

The protein localises to the cytoplasm. It localises to the golgi apparatus. Its function is as follows. Required for the localization of ubp5 to the Golgi apparatus. Involved in detoxification of cadmium ion. This Schizosaccharomyces pombe (strain 972 / ATCC 24843) (Fission yeast) protein is Ubp5-interacting protein ftp105 (ftp105).